Consider the following 219-residue polypeptide: Ribose-5-phosphate isomerase A (219 aa).

Residues Thr28–Thr31, Asp81–Asp84, and Lys94–Gly97 contribute to the substrate site. Catalysis depends on Glu103, which acts as the Proton acceptor. Residue Lys121 participates in substrate binding.

Belongs to the ribose 5-phosphate isomerase family. Homodimer.

The catalysed reaction is aldehydo-D-ribose 5-phosphate = D-ribulose 5-phosphate. It participates in carbohydrate degradation; pentose phosphate pathway; D-ribose 5-phosphate from D-ribulose 5-phosphate (non-oxidative stage): step 1/1. Its function is as follows. Catalyzes the reversible conversion of ribose-5-phosphate to ribulose 5-phosphate. The polypeptide is Ribose-5-phosphate isomerase A (Photorhabdus laumondii subsp. laumondii (strain DSM 15139 / CIP 105565 / TT01) (Photorhabdus luminescens subsp. laumondii)).